The primary structure comprises 339 residues: DNA-directed RNA polymerase subunit alpha (339 aa).

The tract at residues methionine 1–glutamate 233 is alpha N-terminal domain (alpha-NTD). Residues lysine 264–phenylalanine 339 form an alpha C-terminal domain (alpha-CTD) region.

It belongs to the RNA polymerase alpha chain family. In plastids the minimal PEP RNA polymerase catalytic core is composed of four subunits: alpha, beta, beta', and beta''. When a (nuclear-encoded) sigma factor is associated with the core the holoenzyme is formed, which can initiate transcription.

It localises to the plastid. The protein resides in the chloroplast. It catalyses the reaction RNA(n) + a ribonucleoside 5'-triphosphate = RNA(n+1) + diphosphate. In terms of biological role, DNA-dependent RNA polymerase catalyzes the transcription of DNA into RNA using the four ribonucleoside triphosphates as substrates. The chain is DNA-directed RNA polymerase subunit alpha from Eremopyrum distans.